The chain runs to 148 residues: Large ribosomal subunit protein uL22 (148 aa).

Belongs to the universal ribosomal protein uL22 family. Part of the 50S ribosomal subunit.

This protein binds specifically to 23S rRNA. It makes multiple contacts with different domains of the 23S rRNA in the assembled 50S subunit and ribosome. Its function is as follows. The globular domain of the protein is located near the polypeptide exit tunnel on the outside of the subunit, while an extended beta-hairpin is found that lines the wall of the exit tunnel in the center of the 70S ribosome. This is Large ribosomal subunit protein uL22 from Thermoplasma volcanium (strain ATCC 51530 / DSM 4299 / JCM 9571 / NBRC 15438 / GSS1).